The following is a 753-amino-acid chain: Dynein regulatory complex protein 1 (753 aa).

Disordered regions lie at residues 1 to 33 (MNPS…DNPQ) and 55 to 76 (LGEY…YKQK). The stretch at 100 to 388 (AADVREIHRR…QFKDLQKALR (289 aa)) forms a coiled coil. A compositionally biased stretch (polar residues) spans 587–597 (SQTDKGSMVSK). A disordered region spans residues 587–628 (SQTDKGSMVSKSDQEPTEQEDEQEGDNASLSSRELEEQEDLS). Residues 601–611 (EPTEQEDEQEG) show a composition bias toward acidic residues. The stretch at 703-739 (VLTERAKLLMENESLEQQNAEMQSLLQQYLQAKVNTE) forms a coiled coil.

The protein belongs to the DRC1 family. In terms of assembly, component of the nexin-dynein regulatory complex (N-DRC). Interacts with CCDC65/DRC2, DRC3, GAS8/DRC4 and TCTE1/DRC5.

The protein resides in the cytoplasm. It is found in the cytoskeleton. The protein localises to the cilium axoneme. Its subcellular location is the flagellum axoneme. In terms of biological role, component of the nexin-dynein regulatory complex (N-DRC) a key regulator of ciliary/flagellar motility which maintains the alignment and integrity of the distal axoneme and regulates microtubule sliding in motile axonemes. Plays a critical role in the assembly of N-DRC and also stabilizes the assembly of multiple inner dynein arms and radial spokes. Coassembles with CCDC65/DRC2 to form a central scaffold needed for assembly of the N-DRC and its attachment to the outer doublet microtubules. The protein is Dynein regulatory complex protein 1 (Drc1) of Mus musculus (Mouse).